Reading from the N-terminus, the 831-residue chain is Probable beta-glucosidase H (831 aa).

Asn13 carries N-linked (GlcNAc...) asparagine glycosylation. Asp225 is a catalytic residue. Residues 389-549 (RLLSNAVIHF…DAEEMINRAV (161 aa)) form the PA14 domain. 6 N-linked (GlcNAc...) asparagine glycosylation sites follow: Asn474, Asn514, Asn604, Asn629, Asn726, and Asn823.

Belongs to the glycosyl hydrolase 3 family.

The protein resides in the secreted. It carries out the reaction Hydrolysis of terminal, non-reducing beta-D-glucosyl residues with release of beta-D-glucose.. Its pathway is glycan metabolism; cellulose degradation. Beta-glucosidases are one of a number of cellulolytic enzymes involved in the degradation of cellulosic biomass. Catalyzes the last step releasing glucose from the inhibitory cellobiose. The polypeptide is Probable beta-glucosidase H (bglH) (Emericella nidulans (strain FGSC A4 / ATCC 38163 / CBS 112.46 / NRRL 194 / M139) (Aspergillus nidulans)).